The sequence spans 431 residues: tRNA-2-methylthio-N(6)-dimethylallyladenosine synthase (431 aa).

The MTTase N-terminal domain maps to 2-117 (KKLFIETLGC…ITEVVDKKHA (116 aa)). 6 residues coordinate [4Fe-4S] cluster: C11, C48, C80, C149, C153, and C156. Positions 135 to 368 (RTNPFKAMVN…QTRHTEILDE (234 aa)) constitute a Radical SAM core domain. Positions 371–431 (DAQLGKVHEV…SRGALDGVLV (61 aa)) constitute a TRAM domain.

It belongs to the methylthiotransferase family. MiaB subfamily. As to quaternary structure, monomer. [4Fe-4S] cluster serves as cofactor.

The protein resides in the cytoplasm. The enzyme catalyses N(6)-dimethylallyladenosine(37) in tRNA + (sulfur carrier)-SH + AH2 + 2 S-adenosyl-L-methionine = 2-methylsulfanyl-N(6)-dimethylallyladenosine(37) in tRNA + (sulfur carrier)-H + 5'-deoxyadenosine + L-methionine + A + S-adenosyl-L-homocysteine + 2 H(+). Catalyzes the methylthiolation of N6-(dimethylallyl)adenosine (i(6)A), leading to the formation of 2-methylthio-N6-(dimethylallyl)adenosine (ms(2)i(6)A) at position 37 in tRNAs that read codons beginning with uridine. This is tRNA-2-methylthio-N(6)-dimethylallyladenosine synthase from Sulfurovum sp. (strain NBC37-1).